Reading from the N-terminus, the 427-residue chain is 3-phosphoshikimate 1-carboxyvinyltransferase (427 aa).

Lys-20, Ser-21, and Arg-25 together coordinate 3-phosphoshikimate. Lys-20 serves as a coordination point for phosphoenolpyruvate. Residues Gly-92 and Arg-120 each coordinate phosphoenolpyruvate. Positions 166, 168, 312, and 339 each coordinate 3-phosphoshikimate. Residue Gln-168 coordinates phosphoenolpyruvate. Asp-312 serves as the catalytic Proton acceptor. 2 residues coordinate phosphoenolpyruvate: Arg-343 and Arg-385.

Belongs to the EPSP synthase family. Monomer.

The protein localises to the cytoplasm. The catalysed reaction is 3-phosphoshikimate + phosphoenolpyruvate = 5-O-(1-carboxyvinyl)-3-phosphoshikimate + phosphate. Its pathway is metabolic intermediate biosynthesis; chorismate biosynthesis; chorismate from D-erythrose 4-phosphate and phosphoenolpyruvate: step 6/7. Its function is as follows. Catalyzes the transfer of the enolpyruvyl moiety of phosphoenolpyruvate (PEP) to the 5-hydroxyl of shikimate-3-phosphate (S3P) to produce enolpyruvyl shikimate-3-phosphate and inorganic phosphate. This is 3-phosphoshikimate 1-carboxyvinyltransferase from Streptococcus thermophilus (strain ATCC BAA-250 / LMG 18311).